The primary structure comprises 199 residues: Peptidyl-tRNA hydrolase (199 aa).

Y15 lines the tRNA pocket. The Proton acceptor role is filled by H20. F66, N68, and N114 together coordinate tRNA.

It belongs to the PTH family. As to quaternary structure, monomer.

The protein resides in the cytoplasm. It carries out the reaction an N-acyl-L-alpha-aminoacyl-tRNA + H2O = an N-acyl-L-amino acid + a tRNA + H(+). Hydrolyzes ribosome-free peptidyl-tRNAs (with 1 or more amino acids incorporated), which drop off the ribosome during protein synthesis, or as a result of ribosome stalling. Its function is as follows. Catalyzes the release of premature peptidyl moieties from peptidyl-tRNA molecules trapped in stalled 50S ribosomal subunits, and thus maintains levels of free tRNAs and 50S ribosomes. The sequence is that of Peptidyl-tRNA hydrolase from Cupriavidus pinatubonensis (strain JMP 134 / LMG 1197) (Cupriavidus necator (strain JMP 134)).